A 377-amino-acid chain; its full sequence is Succinyl-diaminopimelate desuccinylase (377 aa).

His-67 is a Zn(2+) binding site. Residue Asp-69 is part of the active site. Asp-100 is a binding site for Zn(2+). The active-site Proton acceptor is Glu-134. Zn(2+) is bound by residues Glu-135, Glu-163, and His-349.

This sequence belongs to the peptidase M20A family. DapE subfamily. Homodimer. Zn(2+) is required as a cofactor. Requires Co(2+) as cofactor.

It carries out the reaction N-succinyl-(2S,6S)-2,6-diaminopimelate + H2O = (2S,6S)-2,6-diaminopimelate + succinate. The protein operates within amino-acid biosynthesis; L-lysine biosynthesis via DAP pathway; LL-2,6-diaminopimelate from (S)-tetrahydrodipicolinate (succinylase route): step 3/3. Functionally, catalyzes the hydrolysis of N-succinyl-L,L-diaminopimelic acid (SDAP), forming succinate and LL-2,6-diaminopimelate (DAP), an intermediate involved in the bacterial biosynthesis of lysine and meso-diaminopimelic acid, an essential component of bacterial cell walls. This Buchnera aphidicola subsp. Baizongia pistaciae (strain Bp) protein is Succinyl-diaminopimelate desuccinylase.